Consider the following 894-residue polypeptide: ABC-transporter-regulating transcription factor (894 aa).

A DNA-binding region (zn(2)-C6 fungal-type) is located at residues 71-98; the sequence is CDMCRKKKIKCDGKMPKCSHCINYRTDC. The segment covering 159 to 174 has biased composition (polar residues); that stretch reads NTALNSLKSPTNKFNG. The tract at residues 159–219 is disordered; it reads NTALNSLKSP…PKESETEVEG (61 aa). Over residues 175–189 the composition is skewed to low complexity; it reads SSATSQSQHTTASRH. Positions 199 to 210 are enriched in polar residues; that stretch reads SPHTAATSPNSP. The chain crosses the membrane as a helical span at residues 649 to 669; sequence CVWLILYYPVSALVTLFANIL. The disordered stretch occupies residues 724-797; that stretch reads AEKESHSKKK…MSNPTRAFAP (74 aa). Residues 736–750 are compositionally biased toward basic and acidic residues; the sequence is AAPDEPQDLRQKTPD. Polar residues-rich tracts occupy residues 751–761 and 771–792; these read ENSVPSPSTKR and LFPSSSYPINLGNTGPDMSNPT.

The protein localises to the nucleus. It localises to the membrane. In terms of biological role, transcription factor that regulates expression of the genes related to resistance to azole compounds. The sequence is that of ABC-transporter-regulating transcription factor from Aspergillus oryzae (strain ATCC 42149 / RIB 40) (Yellow koji mold).